Here is a 33-residue protein sequence, read N- to C-terminus: ADCLAHLKLCKKNNDCCSKKCSRRGTNPEQRCR.

3 cysteine pairs are disulfide-bonded: cysteine 3/cysteine 17, cysteine 10/cysteine 21, and cysteine 16/cysteine 32. The essential for stimulation of [3H]ryanodine binding to RYR1 stretch occupies residues 23-24 (RR).

As to expression, expressed by the venom gland.

Its subcellular location is the secreted. In terms of biological role, this toxin stabilizes ryanodine receptor 1 (RyR1) opening in a long-lasting subconductance state (60% of the full conductance state). Furthermore, it triggers calcium release from sarcoplasmic vesicles (31 nM are enough to induce a sharp release, and 65% of the total calcium is released after toxin (100 nM) addition) probably by acting as a cell-penetrating peptide (CPP). In addition, it has been shown to dose-dependently stimulate ryanodine binding to RyR1 (EC(50)=3.7 nM). It also augments the bell-shaped calcium-[3H]ryanodine binding curve that is maximal at about 10 uM calcium concentration. It binds a different site as ryanodine. It acts synergistically with caffeine. In vivo, intracerebroventricular injection into mice induces neurotoxic symptoms, followed by death. The sequence is that of Vejocalcin from Vaejovis mexicanus (Mexican scorpion).